Here is a 156-residue protein sequence, read N- to C-terminus: Small ribosomal subunit protein uS7 (156 aa).

It belongs to the universal ribosomal protein uS7 family. As to quaternary structure, part of the 30S ribosomal subunit. Contacts proteins S9 and S11.

In terms of biological role, one of the primary rRNA binding proteins, it binds directly to 16S rRNA where it nucleates assembly of the head domain of the 30S subunit. Is located at the subunit interface close to the decoding center, probably blocks exit of the E-site tRNA. The polypeptide is Small ribosomal subunit protein uS7 (rspG) (Streptomyces coelicolor (strain ATCC BAA-471 / A3(2) / M145)).